Reading from the N-terminus, the 464-residue chain is MRYSLFKNYLPKEEVPEIRKELIKLALPAMGENVLQMLFGMADTAFLGHYSWKAMSGVGLSNQVFWVVQVVLIAASMGATVTIANAIGAGNRKAVRSLAWNSVFLAIFTGVILTALTPLSDVLINIFPNLEGEIESSAKEYLKVILSGSMGFSIMAVFSAMLRGAGDTRTPMIVTGLTNFLNIFLDYAMIFGKFGFPEMGVRGAAVATILSRFVGAGILTYVIFKREEFQLRKGLVPPKWSSQKEILRVGFPTAIENFVFSTGVLMFANILLIAGAEAYAGHRIGINVESLSFMPAFGISVAITTLVGRYNGMGNKEHVLGVIRQGWILSLLFQVTVGIIIFLFPEPLIRIFTSDPQIIEISKLPVKIIGLFQFFLAIDSTMNGALRGTGNTLPPMIITFISIWTARLPVAFVMVKYFQLGLLGAWIGMIADIIFRSTLKLLFFLSGKWEKRAVLTRERVKELG.

Helical transmembrane passes span 22 to 42, 64 to 84, 104 to 124, 142 to 162, 172 to 192, 204 to 224, 258 to 278, 288 to 308, 326 to 346, 358 to 378, 384 to 404, and 410 to 430; these read LIKL…FGMA, VFWV…VTIA, FLAI…DVLI, LKVI…SAML, MIVT…MIFG, AAVA…YVIF, FVFS…GAEA, VESL…TLVG, GWIL…LFPE, IIEI…FLAI, GALR…ISIW, and VAFV…IGMI.

The protein belongs to the multi antimicrobial extrusion (MATE) (TC 2.A.66.1) family.

The protein localises to the cell membrane. Functionally, multidrug efflux pump. This chain is Probable multidrug resistance protein NorM (norM), found in Thermotoga maritima (strain ATCC 43589 / DSM 3109 / JCM 10099 / NBRC 100826 / MSB8).